The primary structure comprises 294 residues: Protoheme IX farnesyltransferase (294 aa).

The next 9 membrane-spanning stretches (helical) occupy residues 24–44 (VVLL…PGWV), 48–68 (LIAF…AINH), 96–116 (ALWF…LFVN), 118–138 (LTAL…TGYL), 145–165 (NIVI…TAVT), 172–192 (ALLL…ALAI), 211–231 (GIQF…VVSL), 241–263 (WIYL…KLYF), and 268–288 (VVAM…FVFL).

The protein belongs to the UbiA prenyltransferase family. Protoheme IX farnesyltransferase subfamily.

It is found in the cell inner membrane. It catalyses the reaction heme b + (2E,6E)-farnesyl diphosphate + H2O = Fe(II)-heme o + diphosphate. The protein operates within porphyrin-containing compound metabolism; heme O biosynthesis; heme O from protoheme: step 1/1. Converts heme B (protoheme IX) to heme O by substitution of the vinyl group on carbon 2 of heme B porphyrin ring with a hydroxyethyl farnesyl side group. This Legionella pneumophila (strain Lens) protein is Protoheme IX farnesyltransferase.